Reading from the N-terminus, the 95-residue chain is Oxytetracycline polyketide synthase acyl carrier protein (95 aa).

Residues 3–81 (LLTLSDLLTL…ALIEMTNASL (79 aa)) enclose the Carrier domain. Ser-41 is subject to O-(pantetheine 4'-phosphoryl)serine.

4'-phosphopantetheine is transferred from CoA to a specific serine of the apo-ACP-like protein.

It functions in the pathway antibiotic biosynthesis; oxytetracycline biosynthesis. Functionally, acyl carrier protein. The protein is Oxytetracycline polyketide synthase acyl carrier protein of Streptomyces rimosus.